The following is a 623-amino-acid chain: Leucine aminopeptidase 2 (623 aa).

A peptide is bound by residues 140–142 (QLE) and 266–271 (PYGGME). His-295 provides a ligand contact to Zn(2+). Glu-296 serves as the catalytic Proton acceptor. Zn(2+) contacts are provided by His-299 and Glu-318. Tyr-382 acts as the Proton donor in catalysis.

Belongs to the peptidase M1 family. It depends on Zn(2+) as a cofactor.

Its subcellular location is the cytoplasm. The protein localises to the nucleus. It catalyses the reaction an epoxide + H2O = an ethanediol. Its function is as follows. Aminopeptidase that preferentially cleaves di- and tripeptides. Also has low epoxide hydrolase activity (in vitro). Can hydrolyze the epoxide leukotriene LTA(4) but it forms preferentially 5,6-dihydroxy-7,9,11,14-eicosatetraenoic acid rather than the cytokine leukotriene B(4) as the product compared to the homologous mammalian enzyme (in vitro). This Eremothecium gossypii (strain ATCC 10895 / CBS 109.51 / FGSC 9923 / NRRL Y-1056) (Yeast) protein is Leucine aminopeptidase 2.